Consider the following 547-residue polypeptide: T-complex protein 1 subunit gamma (547 aa).

Gly-41 lines the ADP pocket. Residue Gly-41 coordinates ATP. Asp-92 provides a ligand contact to Mg(2+). 6 residues coordinate ADP: Gly-93, Thr-94, Thr-95, Ser-96, Thr-161, and Lys-162. Residues Gly-93, Thr-94, and Thr-95 each coordinate ATP. Residues Cys-365 and Cys-371 are joined by a disulfide bond. ADP contacts are provided by Gly-410, Gly-481, Glu-482, Glu-496, and Lys-501. Residues Gly-410 and Gly-481 each contribute to the ATP site. Glu-496 serves as a coordination point for ATP. Positions 525–534 are enriched in basic and acidic residues; sequence HKKKGEDHGR. The tract at residues 525–547 is disordered; it reads HKKKGEDHGRQPAAAPEAPQQAE. Over residues 535-547 the composition is skewed to low complexity; sequence QPAAAPEAPQQAE.

It belongs to the TCP-1 chaperonin family. As to quaternary structure, component of the chaperonin-containing T-complex (TRiC), a hexadecamer composed of two identical back-to-back stacked rings enclosing a protein folding chamber. Each ring is made up of eight different subunits: TCP1/CCT1, CCT2, CCT3, CCT4, CCT5, CCT6A/CCT6, CCT7, CCT8.

It localises to the cytoplasm. The enzyme catalyses ATP + H2O = ADP + phosphate + H(+). Its function is as follows. Component of the chaperonin-containing T-complex (TRiC), a molecular chaperone complex that assists the folding of actin, tubulin and other proteins upon ATP hydrolysis. In Xenopus laevis (African clawed frog), this protein is T-complex protein 1 subunit gamma (cct3).